A 396-amino-acid chain; its full sequence is DNA replication and repair protein RecF (396 aa).

An ATP-binding site is contributed by 30–37 (GANGSGKT).

The protein belongs to the RecF family.

It is found in the cytoplasm. The RecF protein is involved in DNA metabolism; it is required for DNA replication and normal SOS inducibility. RecF binds preferentially to single-stranded, linear DNA. It also seems to bind ATP. The protein is DNA replication and repair protein RecF of Thermomicrobium roseum (strain ATCC 27502 / DSM 5159 / P-2).